A 159-amino-acid chain; its full sequence is Ribosomal RNA large subunit methyltransferase H (159 aa).

Residues leucine 76, glycine 108, and phenylalanine 127–phenylalanine 132 each bind S-adenosyl-L-methionine.

Belongs to the RNA methyltransferase RlmH family. In terms of assembly, homodimer.

It localises to the cytoplasm. It catalyses the reaction pseudouridine(1915) in 23S rRNA + S-adenosyl-L-methionine = N(3)-methylpseudouridine(1915) in 23S rRNA + S-adenosyl-L-homocysteine + H(+). Functionally, specifically methylates the pseudouridine at position 1915 (m3Psi1915) in 23S rRNA. The polypeptide is Ribosomal RNA large subunit methyltransferase H (Clostridium botulinum (strain ATCC 19397 / Type A)).